The sequence spans 414 residues: Glutamyl-tRNA reductase (414 aa).

Substrate is bound by residues 51 to 54, Ser107, 112 to 114, and Gln118; these read TCNR and EYE. The active-site Nucleophile is the Cys52. Residue 187-192 participates in NADP(+) binding; it reads GAGEIG.

It belongs to the glutamyl-tRNA reductase family. Homodimer.

The enzyme catalyses (S)-4-amino-5-oxopentanoate + tRNA(Glu) + NADP(+) = L-glutamyl-tRNA(Glu) + NADPH + H(+). Its pathway is porphyrin-containing compound metabolism; protoporphyrin-IX biosynthesis; 5-aminolevulinate from L-glutamyl-tRNA(Glu): step 1/2. Catalyzes the NADPH-dependent reduction of glutamyl-tRNA(Glu) to glutamate 1-semialdehyde (GSA). This Sulfolobus acidocaldarius (strain ATCC 33909 / DSM 639 / JCM 8929 / NBRC 15157 / NCIMB 11770) protein is Glutamyl-tRNA reductase.